The following is a 386-amino-acid chain: Threonine--tRNA ligase editing subunit (386 aa).

The protein belongs to the class-II aminoacyl-tRNA synthetase family. Archaea-specific ThrRS editing domain subfamily. As to quaternary structure, probably interacts with its catalytic subunit (AC Q97VW8); a subunit fusion (in the order edit-catalytic) is fully functional.

The protein resides in the cytoplasm. Functionally, freestanding tRNA editing subunit of threonine--tRNA ligase, the catalytic subunit is AC Q97VW8. Deacylates (edits) mischarged L-seryl-tRNA(Thr) in trans, removing L-serine, has no aminoacylation activity. In vitro when both subunits are present, or if the 2 subunits are fused, L-seryl-tRNA(Thr) is no longer produced. Has no activity on correctly acylated L-seryl-tRNA(Ser) or L-threonyl-tRNA(Thr). Editing is probably catalyzed by the 2'-OH of A76 of tRNA(Thr). In Saccharolobus solfataricus (strain ATCC 35092 / DSM 1617 / JCM 11322 / P2) (Sulfolobus solfataricus), this protein is Threonine--tRNA ligase editing subunit.